We begin with the raw amino-acid sequence, 603 residues long: Alpha-1,2-mannosyltransferase algn-9 (603 aa).

The segment at Met1–Ser25 is disordered. Over Met1–Ser108 the chain is Lumenal. A helical transmembrane segment spans residues Tyr109 to Thr129. Position 130 (Lys130) is a topological domain, cytoplasmic. A helical membrane pass occupies residues Ile131–Tyr151. Residues Ala152 to Arg166 are Lumenal-facing. Residues Phe167–Pro187 traverse the membrane as a helical segment. Topologically, residues Ser188–Thr195 are cytoplasmic. A helical transmembrane segment spans residues Phe196–Phe216. The Lumenal segment spans residues Ser217–Thr218. The chain crosses the membrane as a helical span at residues Met219 to Leu239. At Lys240–Arg245 the chain is on the cytoplasmic side. Residues Phe246–Ser266 form a helical membrane-spanning segment. Residues His267–Asn310 lie on the Lumenal side of the membrane. Residues Ile311–Trp331 form a helical membrane-spanning segment. The Cytoplasmic segment spans residues Met332–Arg343. The chain crosses the membrane as a helical span at residues Phe344 to Gln364. The Lumenal portion of the chain corresponds to Ala365–Arg370. The chain crosses the membrane as a helical span at residues Phe371–Asn391. The Cytoplasmic segment spans residues Arg392 to Lys397. Residues Leu398–Ser418 form a helical membrane-spanning segment. The Lumenal segment spans residues Arg419–Leu603. Asn443 is a glycosylation site (N-linked (GlcNAc...) asparagine).

It belongs to the glycosyltransferase 22 family.

The protein localises to the endoplasmic reticulum membrane. It carries out the reaction an alpha-D-Man-(1-&gt;2)-alpha-D-Man-(1-&gt;2)-alpha-D-Man-(1-&gt;3)-[alpha-D-Man-(1-&gt;3)-alpha-D-Man-(1-&gt;6)]-beta-D-Man-(1-&gt;4)-beta-D-GlcNAc-(1-&gt;4)-alpha-D-GlcNAc-diphospho-di-trans,poly-cis-dolichol + a di-trans,poly-cis-dolichyl beta-D-mannosyl phosphate = an alpha-D-Man-(1-&gt;2)-alpha-D-Man-(1-&gt;2)-alpha-D-Man-(1-&gt;3)-[alpha-D-Man-(1-&gt;2)-alpha-D-Man-(1-&gt;3)-alpha-D-Man-(1-&gt;6)]-beta-D-Man-(1-&gt;4)-beta-D-GlcNAc-(1-&gt;4)-alpha-D-GlcNAc-diphospho-di-trans,poly-cis-dolichol + a di-trans,poly-cis-dolichyl phosphate + H(+). It catalyses the reaction an alpha-D-Man-(1-&gt;2)-alpha-D-Man-(1-&gt;2)-alpha-D-Man-(1-&gt;3)-[alpha-D-Man-(1-&gt;2)-alpha-D-Man-(1-&gt;3)-[alpha-D-Man-(1-&gt;6)]-alpha-D-Man-(1-&gt;6)]-beta-D-Man-(1-&gt;4)-beta-D-GlcNAc-(1-&gt;4)-alpha-D-GlcNAc-diphospho-di-trans,poly-cis-dolichol + a di-trans,poly-cis-dolichyl beta-D-mannosyl phosphate = an alpha-D-Man-(1-&gt;2)-alpha-D-Man-(1-&gt;2)-alpha-D-Man-(1-&gt;3)-[alpha-D-Man-(1-&gt;2)-alpha-D-Man-(1-&gt;3)-[alpha-D-Man-(1-&gt;2)-alpha-D-Man-(1-&gt;6)]-alpha-D-Man-(1-&gt;6)]-beta-D-Man-(1-&gt;4)-beta-D-GlcNAc-(1-&gt;4)-alpha-D-GlcNAc-diphospho-di-trans,poly-cis-dolichol + a di-trans,poly-cis-dolichyl phosphate + H(+). It participates in protein modification; protein glycosylation. Functionally, catalyzes the transfer of mannose from Dol-P-Man to lipid-linked oligosaccharides. The polypeptide is Alpha-1,2-mannosyltransferase algn-9 (Caenorhabditis elegans).